Consider the following 246-residue polypeptide: MAVQPAQTAYDRAITVFSPDGRLFQVEYAREAVKRGTTALGIKVEEGVVLGVDKRVTSKLIEPESIEKVYQIDTHIGAATAGLVADARVLVERARIEAQTYRYTYGEPIDVDVLVKAICDLKQVYTQHGGVRPFGTALLIAGVDTKGCRLFETDPSGALTEHKATAIGEGRQEALDVFEEEYREDMTLQEAIELAVRALYEASREETTADNLEIAVVDKQGFRKLERKKIEEMFERVVGSEEDEGE.

This sequence belongs to the peptidase T1A family. The 20S proteasome core is composed of 14 alpha and 14 beta subunits that assemble into four stacked heptameric rings, resulting in a barrel-shaped structure. The two inner rings, each composed of seven catalytic beta subunits, are sandwiched by two outer rings, each composed of seven alpha subunits. The catalytic chamber with the active sites is on the inside of the barrel. Has a gated structure, the ends of the cylinder being occluded by the N-termini of the alpha-subunits. Is capped at one or both ends by the proteasome regulatory ATPase, PAN.

It is found in the cytoplasm. The formation of the proteasomal ATPase PAN-20S proteasome complex, via the docking of the C-termini of PAN into the intersubunit pockets in the alpha-rings, triggers opening of the gate for substrate entry. Interconversion between the open-gate and close-gate conformations leads to a dynamic regulation of the 20S proteasome proteolysis activity. Functionally, component of the proteasome core, a large protease complex with broad specificity involved in protein degradation. The sequence is that of Proteasome subunit alpha from Methanopyrus kandleri (strain AV19 / DSM 6324 / JCM 9639 / NBRC 100938).